Here is a 197-residue protein sequence, read N- to C-terminus: Imidazoleglycerol-phosphate dehydratase (197 aa).

Belongs to the imidazoleglycerol-phosphate dehydratase family.

It localises to the cytoplasm. The enzyme catalyses D-erythro-1-(imidazol-4-yl)glycerol 3-phosphate = 3-(imidazol-4-yl)-2-oxopropyl phosphate + H2O. The protein operates within amino-acid biosynthesis; L-histidine biosynthesis; L-histidine from 5-phospho-alpha-D-ribose 1-diphosphate: step 6/9. The protein is Imidazoleglycerol-phosphate dehydratase of Pseudomonas syringae pv. syringae (strain B728a).